A 271-amino-acid polypeptide reads, in one-letter code: Probable esterase D14L (271 aa).

The Nucleophile role is filled by S96. Active-site residues include D218 and H247.

It belongs to the AB hydrolase superfamily. In terms of assembly, component of an intracellular receptor complex involved in the detection of the smoke compound karrikin. As to expression, expressed constitutively in all organs (e.g. roots, stems, leaves, panicles and embryos).

The protein localises to the nucleus. It is found in the cytoplasm. May be involved in strigolactone signaling pathway. Essential for plant responses to karrikins, a class of butenolide compounds, structurally similar to strigolactones, released from burning vegetation that stimulate seed germination and enhance seedling photomorphogenesis. Mediates a specific perception of karrikin. Required for the establishment of symbiosis with the arbuscular mycorrhizal fungi (AMF) Rhizophagus irregularis and Gigaspora rosea. Karrikin binding induces a conformational change. This Oryza sativa subsp. japonica (Rice) protein is Probable esterase D14L (D14L).